Consider the following 303-residue polypeptide: Porphobilinogen deaminase (303 aa).

The residue at position 241 (C241) is an S-(dipyrrolylmethanemethyl)cysteine.

The protein belongs to the HMBS family. Monomer. Dipyrromethane is required as a cofactor.

The catalysed reaction is 4 porphobilinogen + H2O = hydroxymethylbilane + 4 NH4(+). It participates in porphyrin-containing compound metabolism; protoporphyrin-IX biosynthesis; coproporphyrinogen-III from 5-aminolevulinate: step 2/4. The protein operates within porphyrin-containing compound metabolism; chlorophyll biosynthesis. Its function is as follows. Tetrapolymerization of the monopyrrole PBG into the hydroxymethylbilane pre-uroporphyrinogen in several discrete steps. In Roseiflexus castenholzii (strain DSM 13941 / HLO8), this protein is Porphobilinogen deaminase.